The sequence spans 329 residues: GTP 3',8-cyclase (329 aa).

Residues 8 to 234 (AFARKFYYLR…QIRQRSDGPA (227 aa)) enclose the Radical SAM core domain. Arginine 17 provides a ligand contact to GTP. Residues cysteine 24 and cysteine 28 each coordinate [4Fe-4S] cluster. Tyrosine 30 is an S-adenosyl-L-methionine binding site. Residue cysteine 31 coordinates [4Fe-4S] cluster. A GTP-binding site is contributed by arginine 68. S-adenosyl-L-methionine is bound at residue glycine 72. Threonine 99 is a binding site for GTP. Residue serine 123 participates in S-adenosyl-L-methionine binding. GTP is bound at residue lysine 160. Methionine 194 contributes to the S-adenosyl-L-methionine binding site. [4Fe-4S] cluster contacts are provided by cysteine 257 and cysteine 260. 262 to 264 (RLR) lines the GTP pocket. Position 274 (cysteine 274) interacts with [4Fe-4S] cluster.

The protein belongs to the radical SAM superfamily. MoaA family. As to quaternary structure, monomer and homodimer. The cofactor is [4Fe-4S] cluster.

It catalyses the reaction GTP + AH2 + S-adenosyl-L-methionine = (8S)-3',8-cyclo-7,8-dihydroguanosine 5'-triphosphate + 5'-deoxyadenosine + L-methionine + A + H(+). The protein operates within cofactor biosynthesis; molybdopterin biosynthesis. In terms of biological role, catalyzes the cyclization of GTP to (8S)-3',8-cyclo-7,8-dihydroguanosine 5'-triphosphate. The polypeptide is GTP 3',8-cyclase (Klebsiella pneumoniae subsp. pneumoniae (strain ATCC 700721 / MGH 78578)).